Here is a 106-residue protein sequence, read N- to C-terminus: Large ribosomal subunit protein uL24 (106 aa).

This sequence belongs to the universal ribosomal protein uL24 family. As to quaternary structure, part of the 50S ribosomal subunit.

Its function is as follows. One of two assembly initiator proteins, it binds directly to the 5'-end of the 23S rRNA, where it nucleates assembly of the 50S subunit. Functionally, one of the proteins that surrounds the polypeptide exit tunnel on the outside of the subunit. The protein is Large ribosomal subunit protein uL24 of Delftia acidovorans (strain DSM 14801 / SPH-1).